The following is a 272-amino-acid chain: HMP-PP phosphatase (272 aa).

The active-site Nucleophile is D8. Mg(2+)-binding residues include D8, D10, and D212.

The protein belongs to the HAD-like hydrolase superfamily. Cof family. It depends on Mg(2+) as a cofactor.

The catalysed reaction is 4-amino-2-methyl-5-(diphosphooxymethyl)pyrimidine + H2O = 4-amino-2-methyl-5-(phosphooxymethyl)pyrimidine + phosphate + H(+). In terms of biological role, catalyzes the hydrolysis of 4-amino-2-methyl-5-hydroxymethylpyrimidine pyrophosphate (HMP-PP) to 4-amino-2-methyl-5-hydroxymethylpyrimidine phosphate (HMP-P). The polypeptide is HMP-PP phosphatase (Shigella flexneri serotype 5b (strain 8401)).